The following is a 104-amino-acid chain: NADH-quinone oxidoreductase subunit K (104 aa).

3 helical membrane-spanning segments follow: residues 4–24 (VPASAYLTLAIILFCIGLFGA), 31–51 (VIVLVCIELMLNAANLNFVAF), and 67–87 (LFTMAVAAAEAAVGLAILIAL).

Belongs to the complex I subunit 4L family. NDH-1 is composed of 14 different subunits. Subunits NuoA, H, J, K, L, M, N constitute the membrane sector of the complex.

The protein resides in the cell membrane. It catalyses the reaction a quinone + NADH + 5 H(+)(in) = a quinol + NAD(+) + 4 H(+)(out). Functionally, NDH-1 shuttles electrons from NADH, via FMN and iron-sulfur (Fe-S) centers, to quinones in the respiratory chain. The immediate electron acceptor for the enzyme in this species is believed to be a menaquinone. Couples the redox reaction to proton translocation (for every two electrons transferred, four hydrogen ions are translocated across the cytoplasmic membrane), and thus conserves the redox energy in a proton gradient. In Bacillus anthracis (strain A0248), this protein is NADH-quinone oxidoreductase subunit K.